A 129-amino-acid chain; its full sequence is Transmembrane protein 105 (129 aa).

2 helical membrane-spanning segments follow: residues 23–43 (AGNVIGQLIYLLTWSLFTAWL) and 94–114 (FLAGGLHLVPSSLSLAACGVV).

Its subcellular location is the membrane. This Homo sapiens (Human) protein is Transmembrane protein 105 (TMEM105).